A 90-amino-acid chain; its full sequence is Envelope protein US9 (90 aa).

The Intravirion portion of the chain corresponds to 1–67 (MTSRLSDPNS…RRRRTRCVGM (67 aa)). Residues 21–24 (YPTA) carry the Internalization motif motif. An acidic region spans residues 30-39 (EAYYSESEDE). Residues S34 and S36 each carry the phosphoserine; by host CK2 modification. Residues 68–88 (VIACLLVAVLSGGFGALLMWL) traverse the membrane as a helical; Signal-anchor for type II membrane protein segment. Over 89-90 (LR) the chain is Virion surface.

It belongs to the alphaherpesvirinae envelope protein US9 family. Post-translationally, phosphorylated on serines within the acidic cluster, possibly by host CK2. Phosphorylation determines whether endocytosed viral US9 traffics to the trans-Golgi network or recycles to the cell membrane.

It is found in the virion membrane. Its subcellular location is the host Golgi apparatus membrane. It localises to the host smooth endoplasmic reticulum membrane. The protein resides in the host cell membrane. Functionally, essential for the anterograde spread of the infection throughout the host nervous system. Together with the gE/gI heterodimer, US9 is involved in the sorting and transport of viral structural components toward axon tips. This is Envelope protein US9 from Homo sapiens (Human).